Reading from the N-terminus, the 247-residue chain is Sensory rhodopsin-1 (247 aa).

The Extracellular segment spans residues 1-4 (MTGA). A helical transmembrane segment spans residues 5 to 26 (VSAAYWIAAVAFLVGLGITAAL). Residues 27–35 (YAKLGESED) lie on the Cytoplasmic side of the membrane. The chain crosses the membrane as a helical span at residues 36-57 (RGRLAALAVIPGFAGLAYAGMA). The Extracellular segment spans residues 58-71 (LGIGTVTVNGAELV). The chain crosses the membrane as a helical span at residues 72 to 93 (GLRYVDWIVTTPLLVGFIGYVA). The Cytoplasmic portion of the chain corresponds to 94–96 (GAS). A helical transmembrane segment spans residues 97-119 (RRAIAGVMLADALMIAFGAGAVV). Over 120-123 (TGGT) the chain is Extracellular. A helical transmembrane segment spans residues 124 to 151 (LKWVLFGVSSIFHVTLFAYLYVVFPRAV). Topologically, residues 152–154 (PDD) are cytoplasmic. The helical transmembrane segment at 155–182 (PMQRGLFSLLKNHVGLLWLAYPFVWLMG) threads the bilayer. At 183-190 (PAGIGFTT) the chain is on the extracellular side. The chain crosses the membrane as a helical span at residues 191 to 223 (GVGAALTYAFLDVLAKVPYVYFFYARRQAFTDV). An N6-(retinylidene)lysine modification is found at Lys206. Residues 224 to 247 (VSAATADREDATDAVGDGAPTAAD) lie on the Cytoplasmic side of the membrane.

It belongs to the archaeal/bacterial/fungal opsin family. In terms of assembly, interacts with HTR-I.

It is found in the cell membrane. Functionally, involved in the control of phototaxis. Mediates both photoattractant (in the orange light) and photophobic (in the near UV light) responses. The signal is then transmitted to the sensory rhodopsin I transducer (HTR-I). The polypeptide is Sensory rhodopsin-1 (sop1) (Halobacterium sp. (strain SG1)).